The chain runs to 871 residues: DNA mismatch repair protein MutS (871 aa).

ATP is bound at residue 617–624 (GPNMGGKS).

The protein belongs to the DNA mismatch repair MutS family.

Functionally, this protein is involved in the repair of mismatches in DNA. It is possible that it carries out the mismatch recognition step. This protein has a weak ATPase activity. The sequence is that of DNA mismatch repair protein MutS from Hydrogenovibrio crunogenus (strain DSM 25203 / XCL-2) (Thiomicrospira crunogena).